A 216-amino-acid polypeptide reads, in one-letter code: Ethylene-inducing xylanase (216 aa).

An N-terminal signal peptide occupies residues 1-19; it reads MVSFSSLFVAACAAVTAFA. Positions 28 to 216 constitute a GH11 domain; the sequence is AITTSQQGTS…SSGSSDITVS (189 aa). Catalysis depends on Glu-112, which acts as the Nucleophile. Glu-203 (proton donor) is an active-site residue.

This sequence belongs to the glycosyl hydrolase 11 (cellulase G) family.

The protein resides in the secreted. The enzyme catalyses Endohydrolysis of (1-&gt;4)-beta-D-xylosidic linkages in xylans.. It participates in glycan degradation; xylan degradation. In terms of biological role, endo-1,4-beta-xylanase involved in the hydrolysis of xylan, a major structural heterogeneous polysaccharide found in plant biomass representing the second most abundant polysaccharide in the biosphere, after cellulose. Acts as a pathogen-associated molecular pattern (PAMP) that can trigger plant cell death. Triggers a series of immune responses in citrus fruit and enhanced the resistance of citrus and other fruit against fungal pathogens. This chain is Ethylene-inducing xylanase, found in Penicillium digitatum (strain Pd1 / CECT 20795) (Green mold).